The following is a 446-amino-acid chain: Xylose isomerase 2 (446 aa).

Residues His-109 and Asp-112 contribute to the active site. Residues Glu-240, Glu-276, His-279, Asp-304, Asp-315, Asp-317, and Asp-347 each contribute to the Mg(2+) site.

It belongs to the xylose isomerase family. Homotetramer. It depends on Mg(2+) as a cofactor.

The protein localises to the cytoplasm. The enzyme catalyses alpha-D-xylose = alpha-D-xylulofuranose. The polypeptide is Xylose isomerase 2 (Xanthomonas campestris pv. campestris (strain 8004)).